A 653-amino-acid chain; its full sequence is DNA polymerase (653 aa).

Belongs to the DNA polymerase type-B family.

It catalyses the reaction DNA(n) + a 2'-deoxyribonucleoside 5'-triphosphate = DNA(n+1) + diphosphate. Functionally, replicates viral genomic DNA. This Acidianus convivator (ABV) protein is DNA polymerase.